Consider the following 131-residue polypeptide: Chorion class high-cysteine HCB protein 12 (131 aa).

Positions 1–21 (MAAKLIVFVCAIALVAQSVLG) are cleaved as a signal peptide. The left arm stretch occupies residues 22–46 (TGCGCCCRGCGCGCGGCGCGCCENF). Residues 47-110 (RVCSNSAAPT…GNGCVGITRS (64 aa)) form a central domain region. Residues 111–131 (CGGCGCGCGGCGCGCGGCGCC) form a right arm (Gly-rich tandem repeats) region.

It belongs to the chorion protein family.

In terms of biological role, this protein is one of many from the eggshell of the silk moth. The polypeptide is Chorion class high-cysteine HCB protein 12 (Bombyx mori (Silk moth)).